The sequence spans 602 residues: Trichothecene efflux pump TRI12 (602 aa).

4 consecutive transmembrane segments (helical) span residues 49–69, 77–97, 107–127, and 134–154; these read LTLL…SFII, NVSL…LLMG, GFIL…LYSF, and IGAQ…ILFI. Asn160 carries N-linked (GlcNAc...) asparagine glycosylation. A run of 11 helical transmembrane segments spans residues 164–184, 196–216, 240–260, 271–291, 297–317, 355–375, 380–400, 408–428, 450–470, 484–504, and 532–552; these read FLGN…GPYI, WIFY…FIFY, WIGA…VSWG, ILGL…YECY, PIIP…MLLI, STAG…FHIF, WQLI…ASVN, IAFS…TMLL, AICG…KFPG, WGFP…LTGQ, and AAAY…AIIA. N-linked (GlcNAc...) asparagine glycosylation occurs at Asn590.

It belongs to the major facilitator superfamily.

It localises to the cell membrane. Functionally, efflux pump that provides the dual role of trichothecene export and self-protection by allowing the fungus to evade the harmful effect of its own trichothecene production. The polypeptide is Trichothecene efflux pump TRI12 (Trichoderma arundinaceum).